The chain runs to 3078 residues: Probable polyketide synthase 34 (3078 aa).

Residues 28–462 (SGDVAVIGIG…GSNVCLILSE (435 aa)) enclose the Ketosynthase family 3 (KS3) domain. Catalysis depends on for beta-ketoacyl synthase activity residues Cys200, His339, and His385. The interval 665 to 698 (GVSADIIIGHSLGEISSSYCSGIIDFQTLCYLTY) is acyl/malonyl transferase. The For acyl/malonyl transferase activity role is filled by Ser675. Residues 954-1083 (HEKIKNEGPS…GNFSLTKHNI (130 aa)) are N-terminal hotdog fold. One can recognise a PKS/mFAS DH domain in the interval 954 to 1264 (HEKIKNEGPS…CTIVGSNPDS (311 aa)). The active-site Proton acceptor; for dehydratase activity is the His995. The C-terminal hotdog fold stretch occupies residues 1099-1264 (NFTSISKQDL…CTIVGSNPDS (166 aa)). Asp1171 acts as the Proton donor; for dehydratase activity in catalysis. The segment at 1375–1396 (NINNNNNNNNNNNNNNNNNSNG) is disordered. A Carrier domain is found at 2541–2618 (DNNEIIRSTI…QSIEIIKSAH (78 aa)). Ser2578 is modified (O-(pantetheine 4'-phosphoryl)serine). 2 disordered regions span residues 2617–2640 (AHNN…NNNN) and 2739–2761 (NKGS…DNNS). Residues 2619–2640 (NNNNNNNNNNNNNNNNNNNNNN) are compositionally biased toward low complexity. Residues 2621–2652 (NNNNNNNNNNNNNNNNNNNNLVKKEQQSLDEF) adopt a coiled-coil conformation.

Pantetheine 4'-phosphate serves as cofactor.

Probable polyketide synthase. In Dictyostelium discoideum (Social amoeba), this protein is Probable polyketide synthase 34 (pks34).